The sequence spans 206 residues: Large ribosomal subunit protein uL4 (206 aa).

Positions 47 to 77 are disordered; the sequence is TRAQKGRSDVTGSTRKQWRQKGTGRARTGAA.

The protein belongs to the universal ribosomal protein uL4 family. Part of the 50S ribosomal subunit.

Its function is as follows. One of the primary rRNA binding proteins, this protein initially binds near the 5'-end of the 23S rRNA. It is important during the early stages of 50S assembly. It makes multiple contacts with different domains of the 23S rRNA in the assembled 50S subunit and ribosome. Functionally, forms part of the polypeptide exit tunnel. This is Large ribosomal subunit protein uL4 from Nitrosomonas europaea (strain ATCC 19718 / CIP 103999 / KCTC 2705 / NBRC 14298).